We begin with the raw amino-acid sequence, 210 residues long: Replication protein RepB (210 aa).

It belongs to the Gram-positive plasmids replication protein type 2 family.

Its function is as follows. Is essential for plasmid replication. Nicks the positive strand at the plus origin of replication. This is Replication protein RepB (repB) from Streptococcus agalactiae.